Consider the following 285-residue polypeptide: 2-oxoglutarate synthase subunit KorB (285 aa).

As to quaternary structure, heterotetramer of the KorA, KorB, KorC and KorD subunits.

The enzyme catalyses 2 oxidized [2Fe-2S]-[ferredoxin] + 2-oxoglutarate + CoA = succinyl-CoA + 2 reduced [2Fe-2S]-[ferredoxin] + CO2 + H(+). The chain is 2-oxoglutarate synthase subunit KorB (korB) from Methanothermobacter marburgensis (strain ATCC BAA-927 / DSM 2133 / JCM 14651 / NBRC 100331 / OCM 82 / Marburg) (Methanobacterium thermoautotrophicum).